The following is a 243-amino-acid chain: Pyridoxine 5'-phosphate synthase (243 aa).

Asn-9 provides a ligand contact to 3-amino-2-oxopropyl phosphate. Residue 11-12 participates in 1-deoxy-D-xylulose 5-phosphate binding; it reads DH. Arg-20 serves as a coordination point for 3-amino-2-oxopropyl phosphate. Catalysis depends on His-45, which acts as the Proton acceptor. 1-deoxy-D-xylulose 5-phosphate is bound by residues Arg-47 and His-52. Catalysis depends on Glu-72, which acts as the Proton acceptor. Thr-102 is a 1-deoxy-D-xylulose 5-phosphate binding site. His-193 functions as the Proton donor in the catalytic mechanism. 3-amino-2-oxopropyl phosphate is bound by residues Gly-194 and 215–216; that span reads GH.

Belongs to the PNP synthase family. In terms of assembly, homooctamer; tetramer of dimers.

It is found in the cytoplasm. It carries out the reaction 3-amino-2-oxopropyl phosphate + 1-deoxy-D-xylulose 5-phosphate = pyridoxine 5'-phosphate + phosphate + 2 H2O + H(+). Its pathway is cofactor biosynthesis; pyridoxine 5'-phosphate biosynthesis; pyridoxine 5'-phosphate from D-erythrose 4-phosphate: step 5/5. Its function is as follows. Catalyzes the complicated ring closure reaction between the two acyclic compounds 1-deoxy-D-xylulose-5-phosphate (DXP) and 3-amino-2-oxopropyl phosphate (1-amino-acetone-3-phosphate or AAP) to form pyridoxine 5'-phosphate (PNP) and inorganic phosphate. This Vibrio cholerae serotype O1 (strain ATCC 39315 / El Tor Inaba N16961) protein is Pyridoxine 5'-phosphate synthase.